A 477-amino-acid polypeptide reads, in one-letter code: Trigger factor (477 aa).

One can recognise a PPIase FKBP-type domain in the interval 169-254 (EDRVTIDYLG…VKEVAKPNEL (86 aa)). Positions 435 to 477 (VSKEELTAEDEDAASEAKPAKKAAAKKKAAPKKKAEEGKSEEA) are disordered. Positions 454 to 466 (AKKAAAKKKAAPK) are enriched in basic residues. The span at 467-477 (KKAEEGKSEEA) shows a compositional bias: basic and acidic residues.

The protein belongs to the FKBP-type PPIase family. Tig subfamily.

The protein localises to the cytoplasm. It catalyses the reaction [protein]-peptidylproline (omega=180) = [protein]-peptidylproline (omega=0). Functionally, involved in protein export. Acts as a chaperone by maintaining the newly synthesized protein in an open conformation. Functions as a peptidyl-prolyl cis-trans isomerase. This chain is Trigger factor, found in Brucella suis biovar 1 (strain 1330).